The following is a 366-amino-acid chain: MHLLSSLAALAAAITVAFADVQQCNAENASVRKEWGSLTPDEQLGYIDAVWCLRSLPSRLPNEQYPGVQDRVDDFVATHINLTMVIHRNAPFLPWHRQYIHLWETALREECGYNGTVPYWNWTKNPDLYTNPVFDTTQSPETSLSLSGDGAYVAPSPTDPDPDPGLDFAPGRGGGCVLDGPFKDWPVRMGPFSAAQAYPYAPVPENAFAHNPRCLQRNLDVARIQYYNNPSVLESLLAAPSIAVFQDILDRTIPGTWQQAIGAHGGGHISVGPTLADVFASPQDPVFMLHHGFIDLLWDAWQRSGSDTGEGTDRMRALNGTTMYTNPPGAEEATLDTVMEFGVLGSPKKIGEVMDIRGGEYCYRYE.

Positions 1-18 (MHLLSSLAALAAAITVAF) are cleaved as a signal peptide. Asn28 and Asn81 each carry an N-linked (GlcNAc...) asparagine glycan. Residues His87 and His96 each coordinate Cu cation. N-linked (GlcNAc...) asparagine glycans are attached at residues Asn114 and Asn121. A Cu cation-binding site is contributed by His291. The N-linked (GlcNAc...) asparagine glycan is linked to Asn319.

It belongs to the tyrosinase family. Cu(2+) serves as cofactor.

It participates in pigment biosynthesis. Its activity is regulated as follows. Activity is inhibited by 2,3-dihydroxynaphthalene, phenylhydrazine, diethyl dithiocarbamate and 8-hydroxyquinolene. Functionally, nonribosomal peptide synthetase; part of the pathway that mediates the biosynthesis of the gray-brown conidiophore pigment. The first step of the pathway is performed by the nonribosomal peptide synthetase ivoA that catalyzes ATP-dependent unidirectional stereoinversion of L-tryptophan to D-tryptophan with complete conversion. While the stereoinversion is catalyzed by the epimerization (E) domain of ivoA, the terminal condensation (C) domain stereoselectively hydrolyzes D-tryptophanyl-S-phosphopantetheine thioester and thus represents a non-canonical C domain function. D-tryptophan is acetylated, probably by an endogenous acetyltransferase. N-acetyltryptophan is further 6-hydroxylated into N-acetyl-6-hydroxytryptophan (AHT) by the cytochrome P450 monooxygenase ivoC. N-acetyl-6-hydroxytryptophan is substrate of the N-acetyl-6-hydroxytryptophan oxidase ivoB to produce the gray-brown conidiophore pigment. The chain is N-acetyl-6-hydroxytryptophan oxidase ivoB from Emericella nidulans (strain FGSC A4 / ATCC 38163 / CBS 112.46 / NRRL 194 / M139) (Aspergillus nidulans).